A 153-amino-acid chain; its full sequence is Phosphoribosyl-AMP cyclohydrolase (153 aa).

Residue Asp93 participates in Mg(2+) binding. Cys94 is a Zn(2+) binding site. Residues Asp95 and Asp97 each coordinate Mg(2+). Residues Cys112 and Cys119 each coordinate Zn(2+).

Belongs to the PRA-CH family. In terms of assembly, homodimer. Mg(2+) serves as cofactor. The cofactor is Zn(2+).

It localises to the cytoplasm. The catalysed reaction is 1-(5-phospho-beta-D-ribosyl)-5'-AMP + H2O = 1-(5-phospho-beta-D-ribosyl)-5-[(5-phospho-beta-D-ribosylamino)methylideneamino]imidazole-4-carboxamide. It participates in amino-acid biosynthesis; L-histidine biosynthesis; L-histidine from 5-phospho-alpha-D-ribose 1-diphosphate: step 3/9. Catalyzes the hydrolysis of the adenine ring of phosphoribosyl-AMP. The chain is Phosphoribosyl-AMP cyclohydrolase from Mesorhizobium japonicum (strain LMG 29417 / CECT 9101 / MAFF 303099) (Mesorhizobium loti (strain MAFF 303099)).